A 567-amino-acid polypeptide reads, in one-letter code: Urease subunit alpha (567 aa).

The 439-residue stretch at glycine 129–phenylalanine 567 folds into the Urease domain. Ni(2+)-binding residues include histidine 134, histidine 136, and lysine 217. Lysine 217 bears the N6-carboxylysine mark. Position 219 (histidine 219) interacts with substrate. Histidine 246 and histidine 272 together coordinate Ni(2+). Catalysis depends on histidine 320, which acts as the Proton donor. Position 360 (aspartate 360) interacts with Ni(2+).

The protein belongs to the metallo-dependent hydrolases superfamily. Urease alpha subunit family. As to quaternary structure, heterotrimer of UreA (gamma), UreB (beta) and UreC (alpha) subunits. Three heterotrimers associate to form the active enzyme. It depends on Ni cation as a cofactor. In terms of processing, carboxylation allows a single lysine to coordinate two nickel ions.

Its subcellular location is the cytoplasm. It carries out the reaction urea + 2 H2O + H(+) = hydrogencarbonate + 2 NH4(+). Its pathway is nitrogen metabolism; urea degradation; CO(2) and NH(3) from urea (urease route): step 1/1. This Teredinibacter turnerae (strain ATCC 39867 / T7901) protein is Urease subunit alpha.